Here is a 113-residue protein sequence, read N- to C-terminus: Early nodulin-12B (113 aa).

The first 24 residues, 1-24 (MASFSLSILVFFISALVLVPQGFA), serve as a signal peptide directing secretion. The interval 29 to 113 (NPAYRPPQTK…HPPAEDNIHF (85 aa)) is disordered. The span at 32–42 (YRPPQTKPPVN) shows a compositional bias: pro residues. Tandem repeats lie at residues 34 to 38 (PPQTK) and 39 to 43 (PPVNK). The interval 34–109 (PPQTKPPVNK…PTHKHPPAED (76 aa)) is 15 X 5 AA approximate tandem repeats of P-P-[QVHRTA]-[NHKE]-[KEDT]. Residues 44–48 (PSHKE) form a 3; approximate repeat. Basic and acidic residues-rich tracts occupy residues 45–60 (SHKE…KEPP) and 67–113 (KEPP…NIHF). A run of 3 repeats spans residues 49-53 (PPVHK), 54-58 (PPHKE), and 59-63 (PPVNK). The 7; approximate repeat unit spans residues 64-68 (PRHKE). 4 consecutive repeat copies span residues 69 to 73 (PPVHK), 74 to 78 (PPHKD), 79 to 83 (PPVNK), and 84 to 88 (PPQKE). The stretch at 89 to 93 (SPVHK) is one 12; approximate repeat. 3 repeat units span residues 94-98 (PPRKE), 99-103 (PPTHK), and 105-109 (PPAED).

Belongs to the plant proline-rich protein superfamily. ENOD12 family. Expressed only in young nodules.

It localises to the secreted. Its subcellular location is the cell wall. In terms of biological role, involved in the infection process during the plant-rhizobium interaction. This chain is Early nodulin-12B (ENOD12B), found in Medicago sativa (Alfalfa).